Here is a 121-residue protein sequence, read N- to C-terminus: Large ribosomal subunit protein uL18 (121 aa).

It belongs to the universal ribosomal protein uL18 family. As to quaternary structure, part of the 50S ribosomal subunit; part of the 5S rRNA/L5/L18/L25 subcomplex. Contacts the 5S and 23S rRNAs.

Functionally, this is one of the proteins that bind and probably mediate the attachment of the 5S RNA into the large ribosomal subunit, where it forms part of the central protuberance. The sequence is that of Large ribosomal subunit protein uL18 from Burkholderia multivorans (strain ATCC 17616 / 249).